The chain runs to 302 residues: Glutaminase (302 aa).

Residues Ser61, Asn111, Glu155, Asn162, Tyr186, Tyr238, and Val256 each coordinate substrate.

It belongs to the glutaminase family. In terms of assembly, homotetramer.

It carries out the reaction L-glutamine + H2O = L-glutamate + NH4(+). In Pseudomonas syringae pv. tomato (strain ATCC BAA-871 / DC3000), this protein is Glutaminase.